We begin with the raw amino-acid sequence, 187 residues long: GMP synthase [glutamine-hydrolyzing] subunit A (187 aa).

The Glutamine amidotransferase type-1 domain maps to methionine 1–leucine 187. Cysteine 76 acts as the Nucleophile in catalysis. Active-site residues include histidine 164 and glutamate 166.

In terms of assembly, heterodimer composed of a glutamine amidotransferase subunit (A) and a GMP-binding subunit (B).

The enzyme catalyses XMP + L-glutamine + ATP + H2O = GMP + L-glutamate + AMP + diphosphate + 2 H(+). The protein operates within purine metabolism; GMP biosynthesis; GMP from XMP (L-Gln route): step 1/1. Its function is as follows. Catalyzes the synthesis of GMP from XMP. This is GMP synthase [glutamine-hydrolyzing] subunit A from Methanopyrus kandleri (strain AV19 / DSM 6324 / JCM 9639 / NBRC 100938).